The sequence spans 73 residues: Translation initiation factor IF-1 (73 aa).

In terms of domain architecture, S1-like spans 1–73; sequence MAKKEDTIVL…TKARVVYRHR (73 aa).

It belongs to the IF-1 family. As to quaternary structure, component of the 30S ribosomal translation pre-initiation complex which assembles on the 30S ribosome in the order IF-2 and IF-3, IF-1 and N-formylmethionyl-tRNA(fMet); mRNA recruitment can occur at any time during PIC assembly.

The protein localises to the cytoplasm. Its function is as follows. One of the essential components for the initiation of protein synthesis. Stabilizes the binding of IF-2 and IF-3 on the 30S subunit to which N-formylmethionyl-tRNA(fMet) subsequently binds. Helps modulate mRNA selection, yielding the 30S pre-initiation complex (PIC). Upon addition of the 50S ribosomal subunit IF-1, IF-2 and IF-3 are released leaving the mature 70S translation initiation complex. The protein is Translation initiation factor IF-1 of Chlamydia muridarum (strain MoPn / Nigg).